A 311-amino-acid polypeptide reads, in one-letter code: tRNA dimethylallyltransferase (311 aa).

Position 9-16 (9-16) interacts with ATP; sequence GPTAVGKT. Residue 11–16 participates in substrate binding; it reads TAVGKT. The segment at 34–37 is interaction with substrate tRNA; the sequence is DSMQ.

Belongs to the IPP transferase family. Monomer. Mg(2+) is required as a cofactor.

The enzyme catalyses adenosine(37) in tRNA + dimethylallyl diphosphate = N(6)-dimethylallyladenosine(37) in tRNA + diphosphate. Functionally, catalyzes the transfer of a dimethylallyl group onto the adenine at position 37 in tRNAs that read codons beginning with uridine, leading to the formation of N6-(dimethylallyl)adenosine (i(6)A). This is tRNA dimethylallyltransferase from Clostridium botulinum (strain Loch Maree / Type A3).